Reading from the N-terminus, the 227-residue chain is Probable septum site-determining protein MinC (227 aa).

The protein belongs to the MinC family. Interacts with MinD and FtsZ.

Its function is as follows. Cell division inhibitor that blocks the formation of polar Z ring septums. Rapidly oscillates between the poles of the cell to destabilize FtsZ filaments that have formed before they mature into polar Z rings. Prevents FtsZ polymerization. This chain is Probable septum site-determining protein MinC, found in Clostridioides difficile (strain 630) (Peptoclostridium difficile).